Consider the following 115-residue polypeptide: Con-Ins T1A (115 aa).

Positions 1 to 24 (MTTSFYFLLMALGLLLYVCQSSFG) are cleaved as a signal peptide. A propeptide spanning residues 25 to 29 (NQHTR) is cleaved from the precursor. Proline 34 is modified (4-hydroxyproline; partial). 3 cysteine pairs are disulfide-bonded: cysteine 38/cysteine 101, cysteine 50/cysteine 114, and cysteine 100/cysteine 105. Glutamate 41 bears the 4-carboxyglutamate mark. Positions 53–94 (KRNDAGKKRGRASPLWQRGGSLSMLKARAKRNEAFHLQRAHR) are cleaved as a propeptide — c peptide. At glutamate 98 the chain carries 4-carboxyglutamate. 4-hydroxyproline; partial is present on proline 104. Glutamate 109 bears the 4-carboxyglutamate; partial mark. Cysteine amide is present on cysteine 114.

It belongs to the insulin family. In terms of assembly, heterodimer of A and B chains; disulfide-linked. In terms of tissue distribution, expressed by the venom gland.

The protein localises to the secreted. In terms of biological role, this venom insulin, from a fish-hunting cone snail, facilitates prey capture by rapidly inducing hypoglycemic shock. It is one of the smallest known insulin found in nature and lacks the C-terminal segment of the B chain that, in human insulin, mediates engagement of the insulin receptor (INSR) and assembly of the hormone's hexameric storage form. Despite lacking this segment, it both binds and activates human insulin receptor (long isoform (HIR-B)) with a high potency (EC(50)=12.0 nM). In vivo, intraperitoneal injection of this peptide into zebrafish lowers blood glucose with a lower potency than human insulin. In addition, when applied to water, this peptide reduces overall locomotor activity of zebrafish larvae, observed as a significant decrease in the percentage of time spent swimming and movement frequency. When tested on a mouse model of diabetes, this insulin also lowers blood glucose with a 10-fold lower potency than human insulin. This chain is Con-Ins T1A, found in Conus tulipa (Fish-hunting cone snail).